The sequence spans 853 residues: DNA mismatch repair protein MutS (853 aa).

614 to 621 (GPNMGGKS) lines the ATP pocket.

The protein belongs to the DNA mismatch repair MutS family.

In terms of biological role, this protein is involved in the repair of mismatches in DNA. It is possible that it carries out the mismatch recognition step. This protein has a weak ATPase activity. This chain is DNA mismatch repair protein MutS, found in Klebsiella pneumoniae subsp. pneumoniae (strain ATCC 700721 / MGH 78578).